We begin with the raw amino-acid sequence, 299 residues long: Quinolinate synthase (299 aa).

Iminosuccinate contacts are provided by H21 and S38. Residue C83 coordinates [4Fe-4S] cluster. Iminosuccinate contacts are provided by residues 109–111 and S126; that span reads YVN. C170 provides a ligand contact to [4Fe-4S] cluster. Iminosuccinate is bound by residues 196 to 198 and T213; that span reads HPE. C256 contacts [4Fe-4S] cluster.

The protein belongs to the quinolinate synthase family. Type 2 subfamily. [4Fe-4S] cluster serves as cofactor.

It localises to the cytoplasm. It carries out the reaction iminosuccinate + dihydroxyacetone phosphate = quinolinate + phosphate + 2 H2O + H(+). It functions in the pathway cofactor biosynthesis; NAD(+) biosynthesis; quinolinate from iminoaspartate: step 1/1. Catalyzes the condensation of iminoaspartate with dihydroxyacetone phosphate to form quinolinate. The protein is Quinolinate synthase of Pyrococcus abyssi (strain GE5 / Orsay).